Reading from the N-terminus, the 288-residue chain is MEKVIDITERVPAMKKRRRRRTNFKFLALVTIFLFIIIILLYFQLPYSDIKKIDIKGAALKEDTYYIDQSNLKINDSLWGFKISEVEQAIAQHEWVKSVTVERKFLNEVQITVEEWQKVAYISQDGEFYPMLDNGIVFEESNEIVPIDAPIFRDFENEALRKKLLKELANLKPEVLSLISQINANPTEADPYSITLFMNDGYEVRADANTLAEKLNYYPSIIAQIESEDVSEKGIVDIEVGSYYRPFSDEYTLIKENTEKTEEPAEETENADTEEGGQLEEQNEEEPE.

Over 1 to 25 (MEKVIDITERVPAMKKRRRRRTNFK) the chain is Cytoplasmic. Residues 26-46 (FLALVTIFLFIIIILLYFQLP) form a helical membrane-spanning segment. The Extracellular segment spans residues 47–288 (YSDIKKIDIK…LEEQNEEEPE (242 aa)). The POTRA domain maps to 48-116 (SDIKKIDIKG…NEVQITVEEW (69 aa)). A compositionally biased stretch (basic and acidic residues) spans 253-263 (LIKENTEKTEE). The segment at 253 to 288 (LIKENTEKTEEPAEETENADTEEGGQLEEQNEEEPE) is disordered. Over residues 264–288 (PAEETENADTEEGGQLEEQNEEEPE) the composition is skewed to acidic residues.

This sequence belongs to the FtsQ/DivIB family. DivIB subfamily.

It is found in the cell membrane. Cell division protein that may be involved in stabilizing or promoting the assembly of the division complex. This chain is Cell division protein DivIB, found in Solibacillus silvestris (strain StLB046) (Bacillus silvestris).